The sequence spans 1038 residues: uncharacterized protein (1038 aa).

The span at 1–14 shows a compositional bias: polar residues; that stretch reads MEENTAQKQSNATG. Residues 1–100 are disordered; that stretch reads MEENTAQKQS…QSENENYDFS (100 aa). Residues 58–71 show a composition bias toward basic and acidic residues; sequence NPERELNSDGTDRI. The span at 72 to 83 shows a compositional bias: acidic residues; the sequence is IEEEEEEDDIEN. A phosphoserine mark is found at serine 112, serine 113, and serine 114. 5 disordered regions span residues 144 to 201, 360 to 381, 422 to 441, 454 to 526, and 556 to 575; these read GKDP…VKRR, ELDNTSEKATLETSSKPVTEQA, SHSNHSNEKFEQIPSPDEKL, QTTK…SGEL, and TNSEVETVTNDPSFSQQPGT. Residues 156 to 179 are compositionally biased toward low complexity; the sequence is SSMASSSTRSSQSSQVSAIQPQSQ. The span at 180-198 shows a compositional bias: basic and acidic residues; sequence DDNRVSDIRQMENRRELNV. 2 stretches are compositionally biased toward basic and acidic residues: residues 426 to 441 and 489 to 505; these read HSNEKFEQIPSPDEKL and DAEKEKDENLSKPEHHP. Serine 436 is subject to Phosphoserine. The span at 506 to 522 shows a compositional bias: polar residues; the sequence is SITSVNSPFLYSPSKQP. 2 positions are modified to phosphoserine: serine 618 and serine 856. Disordered regions lie at residues 803 to 864, 940 to 974, and 1005 to 1024; these read RGSL…ASAD, GEAPKEAPPPPRSEPVSTTTKLAKRITQPSLSPAR, and KAKSEQSNAKSSSSSIKESK. Low complexity predominate over residues 826-859; sequence TLSLKTSTTGLSSHSKSAENNSTQQSTTSPSINS. Polar residues predominate over residues 955–974; sequence VSTTTKLAKRITQPSLSPAR. A compositionally biased stretch (low complexity) spans 1009–1020; sequence EQSNAKSSSSSI.

The protein resides in the cytoplasm. This is an uncharacterized protein from Schizosaccharomyces pombe (strain 972 / ATCC 24843) (Fission yeast).